The following is a 198-amino-acid chain: Recombination protein RecR (198 aa).

A C4-type zinc finger spans residues Cys57–Cys72. One can recognise a Toprim domain in the interval Thr80–Ala175.

This sequence belongs to the RecR family.

May play a role in DNA repair. It seems to be involved in an RecBC-independent recombinational process of DNA repair. It may act with RecF and RecO. The chain is Recombination protein RecR from Streptococcus thermophilus (strain CNRZ 1066).